The following is a 372-amino-acid chain: Tetraacyldisaccharide 4'-kinase (372 aa).

Threonine 65 to threonine 72 provides a ligand contact to ATP. Residues glutamine 351 to alanine 372 are disordered. The span at glycine 360–alanine 372 shows a compositional bias: basic and acidic residues.

It belongs to the LpxK family.

The enzyme catalyses a lipid A disaccharide + ATP = a lipid IVA + ADP + H(+). It functions in the pathway glycolipid biosynthesis; lipid IV(A) biosynthesis; lipid IV(A) from (3R)-3-hydroxytetradecanoyl-[acyl-carrier-protein] and UDP-N-acetyl-alpha-D-glucosamine: step 6/6. Functionally, transfers the gamma-phosphate of ATP to the 4'-position of a tetraacyldisaccharide 1-phosphate intermediate (termed DS-1-P) to form tetraacyldisaccharide 1,4'-bis-phosphate (lipid IVA). The sequence is that of Tetraacyldisaccharide 4'-kinase from Cupriavidus metallidurans (strain ATCC 43123 / DSM 2839 / NBRC 102507 / CH34) (Ralstonia metallidurans).